Reading from the N-terminus, the 420-residue chain is Ribulose bisphosphate carboxylase large chain (420 aa).

The substrate site is built by Asn103 and Thr153. The active-site Proton acceptor is Lys155. Lys157 is a binding site for substrate. Residues Lys181, Asp183, and Glu184 each coordinate Mg(2+). Position 181 is an N6-carboxylysine (Lys181). His274 functions as the Proton acceptor in the catalytic mechanism. Residues Arg275, His307, and Ser359 each coordinate substrate.

Belongs to the RuBisCO large chain family. Type I subfamily. Heterohexadecamer of 8 large chains and 8 small chains; disulfide-linked. The disulfide link is formed within the large subunit homodimers. Mg(2+) serves as cofactor. Post-translationally, the disulfide bond which can form in the large chain dimeric partners within the hexadecamer appears to be associated with oxidative stress and protein turnover.

It is found in the plastid. The protein resides in the chloroplast. The enzyme catalyses 2 (2R)-3-phosphoglycerate + 2 H(+) = D-ribulose 1,5-bisphosphate + CO2 + H2O. It carries out the reaction D-ribulose 1,5-bisphosphate + O2 = 2-phosphoglycolate + (2R)-3-phosphoglycerate + 2 H(+). Functionally, ruBisCO catalyzes two reactions: the carboxylation of D-ribulose 1,5-bisphosphate, the primary event in carbon dioxide fixation, as well as the oxidative fragmentation of the pentose substrate in the photorespiration process. Both reactions occur simultaneously and in competition at the same active site. The chain is Ribulose bisphosphate carboxylase large chain from Anemia mexicana (Mexican fern).